Here is a 274-residue protein sequence, read N- to C-terminus: Cytochrome b-c1 complex subunit Rieske, mitochondrial (274 aa).

At 79–103 (SHTDIKVPDFSDYRRSEVLDTTKSS) the chain is on the mitochondrial matrix side. The chain crosses the membrane as a helical span at residues 104–140 (RESSDARKGFSYLVTATTAVGVTYAAKSIVTQFVSSM). The Mitochondrial intermembrane portion of the chain corresponds to 141–274 (SASADVLAMS…FTSDDLVIVG (134 aa)). One can recognise a Rieske domain in the interval 187-272 (EAAVELSQLR…YEFTSDDLVI (86 aa)). [2Fe-2S] cluster is bound by residues Cys-217, His-219, Cys-236, His-239, and Ser-241. Cys-222 and Cys-238 are joined by a disulfide.

The protein belongs to the Rieske iron-sulfur protein family. Component of the ubiquinol-cytochrome c oxidoreductase (cytochrome b-c1 complex, complex III, CIII), a multisubunit enzyme composed of 11 subunits. The complex is composed of 3 respiratory subunits cytochrome b, cytochrome c1 and Rieske protein UQCRFS1, 2 core protein subunits UQCRC1/QCR1 and UQCRC2/QCR2, and 6 low-molecular weight protein subunits UQCRH/QCR6, UQCRB/QCR7, UQCRQ/QCR8, UQCR10/QCR9, UQCR11/QCR10 and subunit 9, the cleavage product of Rieske protein UQCRFS1. The complex exists as an obligatory dimer and forms supercomplexes (SCs) in the inner mitochondrial membrane with NADH-ubiquinone oxidoreductase (complex I, CI) and cytochrome c oxidase (complex IV, CIV), resulting in different assemblies (supercomplex SCI(1)III(2)IV(1) and megacomplex MCI(2)III(2)IV(2)). Incorporation of the Rieske protein UQCRFS1 is the penultimate step in complex III assembly. Interacts with TTC19, which is involved in the clearance of UQCRFS1 fragments. As to quaternary structure, component of the ubiquinol-cytochrome c oxidoreductase (cytochrome b-c1 complex, complex III, CIII). Subunit 9 corresponds to the mitochondrial targeting sequence (MTS) of Rieske protein UQCRFS1. It is retained after processing and incorporated inside complex III, where it remains bound to the complex and localizes between the 2 core subunits UQCRC1/QCR1 and UQCRC2/QCR2. The cofactor is [2Fe-2S] cluster. Proteolytic processing is necessary for the correct insertion of UQCRFS1 in the complex III dimer. Several fragments are generated during UQCRFS1 insertion, most probably due to the endogenous matrix-processing peptidase (MPP) activity of the 2 core protein subunits UQCRC1/QCR1 and UQCRC2/QCR2, which are homologous to the 2 mitochondrial-processing peptidase (MPP) subunits beta-MPP and alpha-MPP respectively. The action of the protease is also necessary for the clearance of the UQCRFS1 fragments.

The protein localises to the mitochondrion inner membrane. It catalyses the reaction a quinol + 2 Fe(III)-[cytochrome c](out) = a quinone + 2 Fe(II)-[cytochrome c](out) + 2 H(+)(out). Functionally, component of the ubiquinol-cytochrome c oxidoreductase, a multisubunit transmembrane complex that is part of the mitochondrial electron transport chain which drives oxidative phosphorylation. The respiratory chain contains 3 multisubunit complexes succinate dehydrogenase (complex II, CII), ubiquinol-cytochrome c oxidoreductase (cytochrome b-c1 complex, complex III, CIII) and cytochrome c oxidase (complex IV, CIV), that cooperate to transfer electrons derived from NADH and succinate to molecular oxygen, creating an electrochemical gradient over the inner membrane that drives transmembrane transport and the ATP synthase. The cytochrome b-c1 complex catalyzes electron transfer from ubiquinol to cytochrome c, linking this redox reaction to translocation of protons across the mitochondrial inner membrane, with protons being carried across the membrane as hydrogens on the quinol. In the process called Q cycle, 2 protons are consumed from the matrix, 4 protons are released into the intermembrane space and 2 electrons are passed to cytochrome c. The Rieske protein is a catalytic core subunit containing a [2Fe-2S] iron-sulfur cluster. It cycles between 2 conformational states during catalysis to transfer electrons from the quinol bound in the Q(0) site in cytochrome b to cytochrome c1. Incorporation of UQCRFS1 is the penultimate step in complex III assembly. In terms of biological role, component of the ubiquinol-cytochrome c oxidoreductase (cytochrome b-c1 complex, complex III, CIII). UQCRFS1 undergoes proteolytic processing once it is incorporated in the complex III dimer. One of the fragments, called subunit 9, corresponds to its mitochondrial targeting sequence (MTS). The proteolytic processing is necessary for the correct insertion of UQCRFS1 in the complex III dimer, but the persistence of UQCRFS1-derived fragments may prevent newly imported UQCRFS1 to be processed and assembled into complex III and is detrimental for the complex III structure and function. This Aotus azarae (Azara's night monkey) protein is Cytochrome b-c1 complex subunit Rieske, mitochondrial (UQCRFS1).